We begin with the raw amino-acid sequence, 256 residues long: Glucanase inhibitor protein 2 (256 aa).

The signal sequence occupies residues 1 to 15; that stretch reads MKLISTIAAATTAFG. One can recognise a Peptidase S1 domain in the interval 27–254; it reads IFGGGIIPSG…ATEWINSVTK (228 aa). Cysteine 54 and cysteine 70 form a disulfide bridge. Asparagine 87, asparagine 102, asparagine 107, and asparagine 157 each carry an N-linked (GlcNAc...) asparagine glycan. Disulfide bonds link cysteine 177–cysteine 189 and cysteine 199–cysteine 230.

The protein belongs to the peptidase S1 family. As to quaternary structure, forms an apoplastic complex with host endoglucanases in tomato leaves during P.infestans infection.

The protein localises to the secreted. Its function is as follows. Secreted effector that suppresses host plant glucan elicitor-mediated defense responses. Targets host endoglucanases and inhibits the endoglucanase-mediated release of elicitor-active glucan oligosaccharides from P.infestans cell walls. This is Glucanase inhibitor protein 2 from Phytophthora infestans (Potato late blight agent).